We begin with the raw amino-acid sequence, 1447 residues long: Gag-Pol polyprotein (1447 aa).

The N-myristoyl glycine; by host moiety is linked to residue G2. Positions V7–L31 are interaction with Gp41. The segment at L8–R43 is interaction with host CALM1. The interval E12 to I19 is interaction with host AP3D1. An interaction with membrane phosphatidylinositol 4,5-bisphosphate and RNA region spans residues D14–H33. Residues W16–R22 carry the Nuclear export signal motif. The Nuclear localization signal signature appears at K26–K32. The interaction with membrane phosphatidylinositol 4,5-bisphosphate stretch occupies residues E73 to S77. The interval E106–V128 is disordered. Phosphotyrosine; by host is present on Y132. Positions N189 to Q227 are interaction with human PPIA/CYPA and NUP153. The segment at Y277 to L363 is dimerization/Multimerization of capsid protein p24. CCHC-type zinc fingers lie at residues V390 to A407 and K411 to E428. The interval E447–Q476 is disordered. Residues S450–P470 show a composition bias toward polar residues. Residues P501–L505 form a dimerization of protease region. In terms of domain architecture, Peptidase A2 spans K520–L589. The active-site For protease activity; shared with dimeric partner is D525. Dimerization of protease regions lie at residues G549–K555 and N588–P600. Residues E643–L833 enclose the Reverse transcriptase domain. Mg(2+) contacts are provided by D709, D784, and D785. The tract at residues F826 to H834 is RT 'primer grip'. The Tryptophan repeat motif signature appears at W997–W1013. Positions I1033–R1156 constitute an RNase H type-1 domain. The Mg(2+) site is built by D1042, E1077, D1097, and D1148. Residues D1162–Q1203 form an Integrase-type zinc finger. Zn(2+) is bound by residues H1171, H1175, C1199, and C1202. Residues V1213 to I1363 enclose the Integrase catalytic domain. Mg(2+) contacts are provided by D1223, D1275, and E1311. The segment at residues F1382–D1429 is a DNA-binding region (integrase-type).

In terms of assembly, homotrimer; further assembles as hexamers of trimers. Interacts with gp41 (via C-terminus). Interacts with host CALM1; this interaction induces a conformational change in the Matrix protein, triggering exposure of the myristate group. Interacts with host AP3D1; this interaction allows the polyprotein trafficking to multivesicular bodies during virus assembly. Part of the pre-integration complex (PIC) which is composed of viral genome, matrix protein, Vpr and integrase. As to quaternary structure, homodimer; the homodimer further multimerizes as homohexamers or homopentamers. Interacts with human PPIA/CYPA; This interaction stabilizes the capsid. Interacts with human NUP153. Interacts with host PDZD8; this interaction stabilizes the capsid. Interacts with monkey TRIM5; this interaction destabilizes the capsid. Homodimer, whose active site consists of two apposed aspartic acid residues. In terms of assembly, heterodimer of p66 RT and p51 RT (RT p66/p51). Heterodimerization of RT is essential for DNA polymerase activity. The overall folding of the subdomains is similar in p66 RT and p51 RT but the spatial arrangements of the subdomains are dramatically different. As to quaternary structure, homotetramer; may further associate as a homohexadecamer. Part of the pre-integration complex (PIC) which is composed of viral genome, matrix protein, Vpr and integrase. Interacts with human SMARCB1/INI1 and human PSIP1/LEDGF isoform 1. Interacts with human KPNA3; this interaction might play a role in nuclear import of the pre-integration complex. Interacts with human NUP153; this interaction might play a role in nuclear import of the pre-integration complex. It depends on Mg(2+) as a cofactor. Post-translationally, specific enzymatic cleavages by the viral protease yield mature proteins. The protease is released by autocatalytic cleavage. The polyprotein is cleaved during and after budding, this process is termed maturation. Proteolytic cleavage of p66 RT removes the RNase H domain to yield the p51 RT subunit. Nucleocapsid protein p7 might be further cleaved after virus entry. Tyrosine phosphorylated presumably in the virion by a host kinase. Phosphorylation is apparently not a major regulator of membrane association. In terms of processing, phosphorylated possibly by host MAPK1; this phosphorylation is necessary for Pin1-mediated virion uncoating. Post-translationally, methylated by host PRMT6, impairing its function by reducing RNA annealing and the initiation of reverse transcription.

It is found in the host cell membrane. The protein resides in the host endosome. The protein localises to the host multivesicular body. It localises to the virion membrane. Its subcellular location is the host nucleus. It is found in the host cytoplasm. The protein resides in the virion. It carries out the reaction Specific for a P1 residue that is hydrophobic, and P1' variable, but often Pro.. The enzyme catalyses Endohydrolysis of RNA in RNA/DNA hybrids. Three different cleavage modes: 1. sequence-specific internal cleavage of RNA. Human immunodeficiency virus type 1 and Moloney murine leukemia virus enzymes prefer to cleave the RNA strand one nucleotide away from the RNA-DNA junction. 2. RNA 5'-end directed cleavage 13-19 nucleotides from the RNA end. 3. DNA 3'-end directed cleavage 15-20 nucleotides away from the primer terminus.. It catalyses the reaction 3'-end directed exonucleolytic cleavage of viral RNA-DNA hybrid.. The catalysed reaction is DNA(n) + a 2'-deoxyribonucleoside 5'-triphosphate = DNA(n+1) + diphosphate. The viral protease is inhibited by many synthetic protease inhibitors (PIs), such as amprenavir, atazanavir, indinavir, loprinavir, nelfinavir, ritonavir and saquinavir. RT can be inhibited either by nucleoside RT inhibitors (NRTIs) or by non nucleoside RT inhibitors (NNRTIs). NRTIs act as chain terminators, whereas NNRTIs inhibit DNA polymerization by binding a small hydrophobic pocket near the RT active site and inducing an allosteric change in this region. Classical NRTIs are abacavir, adefovir (PMEA), didanosine (ddI), lamivudine (3TC), stavudine (d4T), tenofovir (PMPA), zalcitabine (ddC), and zidovudine (AZT). Classical NNRTIs are atevirdine (BHAP U-87201E), delavirdine, efavirenz (DMP-266), emivirine (I-EBU), and nevirapine (BI-RG-587). The tritherapies used as a basic effective treatment of AIDS associate two NRTIs and one NNRTI. Use of protease inhibitors in tritherapy regimens permit more ambitious therapeutic strategies. In terms of biological role, gag-Pol polyprotein and Gag polyprotein may regulate their own translation, by the binding genomic RNA in the 5'-UTR. At low concentration, Gag-Pol and Gag would promote translation, whereas at high concentration, the polyproteins encapsidate genomic RNA and then shut off translation. Matrix protein p17 targets Gag and Gag-pol polyproteins to the plasma membrane via a multipartite membrane-binding signal, that includes its myristoylated N-terminus. Matrix protein is part of the pre-integration complex. Implicated in the release from host cell mediated by Vpu. Binds to RNA. Its function is as follows. Forms the conical core that encapsulates the genomic RNA-nucleocapsid complex in the virion. Most core are conical, with only 7% tubular. The core is constituted by capsid protein hexamer subunits. The core is disassembled soon after virion entry. Host restriction factors such as TRIM5-alpha or TRIMCyp bind retroviral capsids and cause premature capsid disassembly, leading to blocks in reverse transcription. Capsid restriction by TRIM5 is one of the factors which restricts HIV-1 to the human species. Host PIN1 apparently facilitates the virion uncoating. On the other hand, interactions with PDZD8 or CYPA stabilize the capsid. Functionally, nucleocapsid protein p7 encapsulates and protects viral dimeric unspliced genomic RNA (gRNA). Binds these RNAs through its zinc fingers. Acts as a nucleic acid chaperone which is involved in rearangement of nucleic acid secondary structure during gRNA retrotranscription. Also facilitates template switch leading to recombination. As part of the polyprotein, participates in gRNA dimerization, packaging, tRNA incorporation and virion assembly. In terms of biological role, the aspartyl protease mediates proteolytic cleavages of Gag and Gag-Pol polyproteins during or shortly after the release of the virion from the plasma membrane. Cleavages take place as an ordered, step-wise cascade to yield mature proteins. This process is called maturation. Displays maximal activity during the budding process just prior to particle release from the cell. Also cleaves Nef and Vif, probably concomitantly with viral structural proteins on maturation of virus particles. Hydrolyzes host EIF4GI and PABP1 in order to shut off the capped cellular mRNA translation. The resulting inhibition of cellular protein synthesis serves to ensure maximal viral gene expression and to evade host immune response. Also mediates cleavage of host YTHDF3. Mediates cleavage of host CARD8, thereby activating the CARD8 inflammasome, leading to the clearance of latent HIV-1 in patient CD4(+) T-cells after viral reactivation; in contrast, HIV-1 can evade CARD8-sensing when its protease remains inactive in infected cells prior to viral budding. Reverse transcriptase/ribonuclease H (RT) is a multifunctional enzyme that converts the viral RNA genome into dsDNA in the cytoplasm, shortly after virus entry into the cell. This enzyme displays a DNA polymerase activity that can copy either DNA or RNA templates, and a ribonuclease H (RNase H) activity that cleaves the RNA strand of RNA-DNA heteroduplexes in a partially processive 3' to 5' endonucleasic mode. Conversion of viral genomic RNA into dsDNA requires many steps. A tRNA(3)-Lys binds to the primer-binding site (PBS) situated at the 5'-end of the viral RNA. RT uses the 3' end of the tRNA primer to perform a short round of RNA-dependent minus-strand DNA synthesis. The reading proceeds through the U5 region and ends after the repeated (R) region which is present at both ends of viral RNA. The portion of the RNA-DNA heteroduplex is digested by the RNase H, resulting in a ssDNA product attached to the tRNA primer. This ssDNA/tRNA hybridizes with the identical R region situated at the 3' end of viral RNA. This template exchange, known as minus-strand DNA strong stop transfer, can be either intra- or intermolecular. RT uses the 3' end of this newly synthesized short ssDNA to perform the RNA-dependent minus-strand DNA synthesis of the whole template. RNase H digests the RNA template except for two polypurine tracts (PPTs) situated at the 5'-end and near the center of the genome. It is not clear if both polymerase and RNase H activities are simultaneous. RNase H probably can proceed both in a polymerase-dependent (RNA cut into small fragments by the same RT performing DNA synthesis) and a polymerase-independent mode (cleavage of remaining RNA fragments by free RTs). Secondly, RT performs DNA-directed plus-strand DNA synthesis using the PPTs that have not been removed by RNase H as primers. PPTs and tRNA primers are then removed by RNase H. The 3' and 5' ssDNA PBS regions hybridize to form a circular dsDNA intermediate. Strand displacement synthesis by RT to the PBS and PPT ends produces a blunt ended, linear dsDNA copy of the viral genome that includes long terminal repeats (LTRs) at both ends. Its function is as follows. Catalyzes viral DNA integration into the host chromosome, by performing a series of DNA cutting and joining reactions. This enzyme activity takes place after virion entry into a cell and reverse transcription of the RNA genome in dsDNA. The first step in the integration process is 3' processing. This step requires a complex comprising the viral genome, matrix protein, Vpr and integrase. This complex is called the pre-integration complex (PIC). The integrase protein removes 2 nucleotides from each 3' end of the viral DNA, leaving recessed CA OH's at the 3' ends. In the second step, the PIC enters cell nucleus. This process is mediated through integrase and Vpr proteins, and allows the virus to infect a non dividing cell. This ability to enter the nucleus is specific of lentiviruses, other retroviruses cannot and rely on cell division to access cell chromosomes. In the third step, termed strand transfer, the integrase protein joins the previously processed 3' ends to the 5' ends of strands of target cellular DNA at the site of integration. The 5'-ends are produced by integrase-catalyzed staggered cuts, 5 bp apart. A Y-shaped, gapped, recombination intermediate results, with the 5'-ends of the viral DNA strands and the 3' ends of target DNA strands remaining unjoined, flanking a gap of 5 bp. The last step is viral DNA integration into host chromosome. This involves host DNA repair synthesis in which the 5 bp gaps between the unjoined strands are filled in and then ligated. Since this process occurs at both cuts flanking the HIV genome, a 5 bp duplication of host DNA is produced at the ends of HIV-1 integration. Alternatively, Integrase may catalyze the excision of viral DNA just after strand transfer, this is termed disintegration. This Homo sapiens (Human) protein is Gag-Pol polyprotein (gag-pol).